The chain runs to 76 residues: Large ribosomal subunit protein bL31 (76 aa).

Zn(2+) is bound by residues Cys-16, Cys-18, Cys-38, and Cys-41.

The protein belongs to the bacterial ribosomal protein bL31 family. Type A subfamily. As to quaternary structure, part of the 50S ribosomal subunit. It depends on Zn(2+) as a cofactor.

Functionally, binds the 23S rRNA. The polypeptide is Large ribosomal subunit protein bL31 (Nocardia farcinica (strain IFM 10152)).